Here is a 546-residue protein sequence, read N- to C-terminus: RFSVRANVKEISFDQSSRAALQAGIDKLADAVGLTLGPRGRNVVLDEFGSPKVVNDGVTIARAIELPDAMENAGAALIREVASKTNDSAGDGTTTASVLAREIIKHGLLSVTSGANPVSLKRGIDKTVQALIEELEKRARPVKGGSDIKAVATISAGNDELVGTMIADAIDKVGPDGVLSIESSSSFETTVEVEEGMEIDRGYISPQFVTNPEKLLVEFENARVLITDQKITAIKDIIPILEKTTQLRAPLLIIAEDVTGEALATLVVNKLRGVLNVVAVKAPGFGERRKAMLQDIAILTGAEYQALDMGLLVENTTIDQLGIARKVTISKDSTTLIADAASKDELQARISQLKKELSETDSVYDSEKLAERIAKLAGGVAVIKVGAATETELEDRKLRIEDAKNATFAAIEEGIVPGGGATLVHLSTVIPAIKEKLEDADERLGADIVQKALVAPAALIAQNAGIEGEVVVEKIMFSEWEIGYNAMTDTYENLLEAGVIDPAKVTRCALQNAASVAGMVLTTQAIVVDKPKPKAPTAAPPQGLMV.

The N-terminal 6 residues, 1–6 (RFSVRA), are a transit peptide targeting the chloroplast. At Ser-50 the chain carries Phosphoserine.

It belongs to the chaperonin (HSP60) family. As to quaternary structure, oligomer of probably six alpha and six beta subunits.

The protein localises to the plastid. The protein resides in the chloroplast. Functionally, this protein binds RuBisCO small and large subunits and is implicated in the assembly of the enzyme oligomer. This chain is RuBisCO large subunit-binding protein subunit alpha, chloroplastic, found in Brassica napus (Rape).